Reading from the N-terminus, the 190-residue chain is Syndecan-2-B (190 aa).

Residues 1–22 (MRNVWLIVPFALLAAFSGETWA) form the signal peptide. Over 23-136 (QADRDLYIDS…NLFHRTEVLA (114 aa)) the chain is Extracellular. The disordered stretch occupies residues 34–60 (ESSGNYPVDDDDYSSGSGSGIPAHDDD). O-linked (Xyl...) (glycosaminoglycan) serine glycans are attached at residues Ser36, Ser48, Ser50, and Ser52. The chain crosses the membrane as a helical span at residues 137-157 (AVIAGGGIGFLFAVFLILLLV). Over 158–190 (YRMRKKDEGSYDLGERKPSSAVYQKAPTKEFYA) the chain is Cytoplasmic. The disordered stretch occupies residues 167 to 190 (SYDLGERKPSSAVYQKAPTKEFYA).

The protein belongs to the syndecan proteoglycan family. O-glycosylated; contains both heparan sulfate and chondroitin sulfate.

Its subcellular location is the membrane. Its function is as follows. Cell surface proteoglycan. The sequence is that of Syndecan-2-B (sdc2-b) from Xenopus laevis (African clawed frog).